A 472-amino-acid polypeptide reads, in one-letter code: 3-isopropylmalate dehydratase large subunit (472 aa).

The [4Fe-4S] cluster site is built by Cys347, Cys407, and Cys410.

It belongs to the aconitase/IPM isomerase family. LeuC type 1 subfamily. Heterodimer of LeuC and LeuD. [4Fe-4S] cluster serves as cofactor.

It catalyses the reaction (2R,3S)-3-isopropylmalate = (2S)-2-isopropylmalate. It functions in the pathway amino-acid biosynthesis; L-leucine biosynthesis; L-leucine from 3-methyl-2-oxobutanoate: step 2/4. Its function is as follows. Catalyzes the isomerization between 2-isopropylmalate and 3-isopropylmalate, via the formation of 2-isopropylmaleate. The protein is 3-isopropylmalate dehydratase large subunit of Bacillus subtilis (strain 168).